A 544-amino-acid polypeptide reads, in one-letter code: Phosphoenolpyruvate carboxykinase (ATP) (544 aa).

G246–T253 provides a ligand contact to ATP.

It belongs to the phosphoenolpyruvate carboxykinase (ATP) family.

The enzyme catalyses oxaloacetate + ATP = phosphoenolpyruvate + ADP + CO2. It participates in carbohydrate biosynthesis; gluconeogenesis. The protein is Phosphoenolpyruvate carboxykinase (ATP) (PCK1) of Candida glabrata (strain ATCC 2001 / BCRC 20586 / JCM 3761 / NBRC 0622 / NRRL Y-65 / CBS 138) (Yeast).